The primary structure comprises 302 residues: Tyrosine recombinase XerC (302 aa).

In terms of domain architecture, Core-binding (CB) spans 6-90 (DLEVTCLQDY…AIKQWGEFLL (85 aa)). In terms of domain architecture, Tyr recombinase spans 111–290 (PLPKNMDVDS…DFQHLAKVYD (180 aa)). Residues arginine 150, lysine 174, histidine 242, arginine 245, and histidine 268 contribute to the active site. Tyrosine 277 acts as the O-(3'-phospho-DNA)-tyrosine intermediate in catalysis.

This sequence belongs to the 'phage' integrase family. XerC subfamily. Forms a cyclic heterotetrameric complex composed of two molecules of XerC and two molecules of XerD.

It localises to the cytoplasm. In terms of biological role, site-specific tyrosine recombinase, which acts by catalyzing the cutting and rejoining of the recombining DNA molecules. The XerC-XerD complex is essential to convert dimers of the bacterial chromosome into monomers to permit their segregation at cell division. It also contributes to the segregational stability of plasmids. This chain is Tyrosine recombinase XerC, found in Shewanella putrefaciens (strain CN-32 / ATCC BAA-453).